Here is a 228-residue protein sequence, read N- to C-terminus: MVAPSAEIDLAPYIDHTLLDPLATPAAIAQLCEEADRYHFATVCLAPIYVRQAVELLYRRTPRVCTVIGFPTGAHTSAVKLYEAQEAADHGATELDVVVNLGWLKAGQTEAVHQEMAEIVAATGVTVKAILETTVLSETEKRLAAEICLDAGVSFLKTSTGWRGGATVADVKLLAQVARDRIGVKASGGIRTAAQALELIHAGATRLGTSRGVDLIRNRDTLEGETNY.

D96 serves as the catalytic Proton donor/acceptor. K157 (schiff-base intermediate with acetaldehyde) is an active-site residue. The active-site Proton donor/acceptor is the K185.

The protein belongs to the DeoC/FbaB aldolase family. DeoC type 1 subfamily.

Its subcellular location is the cytoplasm. The catalysed reaction is 2-deoxy-D-ribose 5-phosphate = D-glyceraldehyde 3-phosphate + acetaldehyde. It functions in the pathway carbohydrate degradation; 2-deoxy-D-ribose 1-phosphate degradation; D-glyceraldehyde 3-phosphate and acetaldehyde from 2-deoxy-alpha-D-ribose 1-phosphate: step 2/2. Functionally, catalyzes a reversible aldol reaction between acetaldehyde and D-glyceraldehyde 3-phosphate to generate 2-deoxy-D-ribose 5-phosphate. In Cyanothece sp. (strain PCC 7425 / ATCC 29141), this protein is Deoxyribose-phosphate aldolase.